The sequence spans 221 residues: Enolase-phosphatase E1 (221 aa).

Residues D9 and E11 each coordinate Mg(2+). Substrate is bound by residues 116–117 (SS) and K152. D180 contributes to the Mg(2+) binding site.

Belongs to the HAD-like hydrolase superfamily. MasA/MtnC family. In terms of assembly, monomer. The cofactor is Mg(2+).

It localises to the cytoplasm. The protein localises to the nucleus. It catalyses the reaction 5-methylsulfanyl-2,3-dioxopentyl phosphate + H2O = 1,2-dihydroxy-5-(methylsulfanyl)pent-1-en-3-one + phosphate. It participates in amino-acid biosynthesis; L-methionine biosynthesis via salvage pathway; L-methionine from S-methyl-5-thio-alpha-D-ribose 1-phosphate: step 3/6. It functions in the pathway amino-acid biosynthesis; L-methionine biosynthesis via salvage pathway; L-methionine from S-methyl-5-thio-alpha-D-ribose 1-phosphate: step 4/6. Its function is as follows. Bifunctional enzyme that catalyzes the enolization of 2,3-diketo-5-methylthiopentyl-1-phosphate (DK-MTP-1-P) into the intermediate 2-hydroxy-3-keto-5-methylthiopentenyl-1-phosphate (HK-MTPenyl-1-P), which is then dephosphorylated to form the acireductone 1,2-dihydroxy-3-keto-5-methylthiopentene (DHK-MTPene). This chain is Enolase-phosphatase E1, found in Kluyveromyces lactis (strain ATCC 8585 / CBS 2359 / DSM 70799 / NBRC 1267 / NRRL Y-1140 / WM37) (Yeast).